The chain runs to 216 residues: Probable GTP-binding protein EngB (216 aa).

Residues 43–216 (DRLEVCFAGR…TLRSIITDLT (174 aa)) form the EngB-type G domain. Residues 51-58 (GRSNVGKS), 78-82 (GRTQE), 96-99 (DLPG), 163-166 (TKAD), and 197-199 (TSS) contribute to the GTP site. 2 residues coordinate Mg(2+): Ser58 and Thr80.

This sequence belongs to the TRAFAC class TrmE-Era-EngA-EngB-Septin-like GTPase superfamily. EngB GTPase family. Requires Mg(2+) as cofactor.

In terms of biological role, necessary for normal cell division and for the maintenance of normal septation. This Roseobacter denitrificans (strain ATCC 33942 / OCh 114) (Erythrobacter sp. (strain OCh 114)) protein is Probable GTP-binding protein EngB.